Here is a 354-residue protein sequence, read N- to C-terminus: Prephenate dehydrogenase (354 aa).

In terms of domain architecture, Prephenate/arogenate dehydrogenase spans 2-283 (KKILIIGLGL…AMEIHKGALP (282 aa)). Residue 3–33 (KILIIGLGLIGSSIALGIKKAHPEFEILGSD) coordinates NAD(+). An ACT domain is found at 287–354 (DLFISVPDEK…IEKATDFTVV (68 aa)).

The protein belongs to the prephenate/arogenate dehydrogenase family.

It carries out the reaction prephenate + NAD(+) = 3-(4-hydroxyphenyl)pyruvate + CO2 + NADH. The protein operates within amino-acid biosynthesis; L-tyrosine biosynthesis; (4-hydroxyphenyl)pyruvate from prephenate (NAD(+) route): step 1/1. This Lactococcus lactis subsp. cremoris (strain MG1363) protein is Prephenate dehydrogenase (tyrA).